The sequence spans 98 residues: Large ribosomal subunit protein uL23 (98 aa).

It belongs to the universal ribosomal protein uL23 family. As to quaternary structure, part of the 50S ribosomal subunit. Contacts protein L29, and trigger factor when it is bound to the ribosome.

Its function is as follows. One of the early assembly proteins it binds 23S rRNA. One of the proteins that surrounds the polypeptide exit tunnel on the outside of the ribosome. Forms the main docking site for trigger factor binding to the ribosome. In Clostridium acetobutylicum (strain ATCC 824 / DSM 792 / JCM 1419 / IAM 19013 / LMG 5710 / NBRC 13948 / NRRL B-527 / VKM B-1787 / 2291 / W), this protein is Large ribosomal subunit protein uL23.